A 569-amino-acid chain; its full sequence is MPTKIPRTNYAAMFGPTTGDKVRLADTDLIIEVERDHTIYGEEVKFGGGKVIRDGMGQSQVTRAQGAMDTVITNALIVDHTGIYKADVGLRDGRIARIGKAGNPDTQPGVDIIIGPSTEAIAGEGKILTAGGFDSHIHFIAPQQIDDALHSGVTTMLGGGTGPAHGTLATTCTPGSWHIGRMLQALDAFPMNFGISGKGNASQPAALVEMIEGGACAMKLHEDWGTTPGAIDCCLSVADDMDVQVMIHTDTLNESGFVENTVAAIKGRTIHAFHTEGAGGGHAPDIIKICGDANVLPSSTNPTRPFTVNTLEEHLDMLMVCHHLDKSIPEDVAFAESRIRRETIAAEDILHDMGAFSIIASDSQAMGRVGEVIIRTWQTADKMKKQRGALTEETGDNDNMRVRRYIAKYTINPAIAHGIAHEIGSIEVGKRADLCLWNPAFFGVKPEMVLMAGTIVCAQMGDTNASIPTPQPVYSRPMFGAFGRSVERSAVLFVSGAAKSANIGETLGLRKELIAVKGTRGIGKKDLILNDALPHIEVNPETYEVRADGELLTCQPAEVLPMAQRYFLF.

The region spanning 131–569 is the Urease domain; it reads GGFDSHIHFI…LPMAQRYFLF (439 aa). Residues His136, His138, and Lys219 each contribute to the Ni(2+) site. An N6-carboxylysine modification is found at Lys219. Substrate is bound at residue His221. Ni(2+) contacts are provided by His248 and His274. The Proton donor role is filled by His322. Asp362 is a binding site for Ni(2+).

Belongs to the metallo-dependent hydrolases superfamily. Urease alpha subunit family. In terms of assembly, heterotrimer of UreA (gamma), UreB (beta) and UreC (alpha) subunits. Three heterotrimers associate to form the active enzyme. Requires Ni cation as cofactor. Carboxylation allows a single lysine to coordinate two nickel ions.

The protein resides in the cytoplasm. The catalysed reaction is urea + 2 H2O + H(+) = hydrogencarbonate + 2 NH4(+). It participates in nitrogen metabolism; urea degradation; CO(2) and NH(3) from urea (urease route): step 1/1. The protein is Urease subunit alpha of Roseobacter denitrificans (strain ATCC 33942 / OCh 114) (Erythrobacter sp. (strain OCh 114)).